The primary structure comprises 272 residues: ATP synthase subunit a (272 aa).

The next 6 helical transmembrane spans lie at 41–61 (VLNIDSIIFSLVLGCFFLSIF), 110–130 (FVWVFLMNLMDLIPIDFFPFI), 143–165 (VPSADINITLSMSLGVFILILFY), 188–208 (VFFIFNFLLELVSLLSKPISL), 222–242 (IFILIAGLLPWWSQFFLNVPW), and 243–263 (AIFHILIISLQAFIFMVLTIV).

Belongs to the ATPase A chain family. In terms of assembly, F-type ATPases have 2 components, CF(1) - the catalytic core - and CF(0) - the membrane proton channel. CF(1) has five subunits: alpha(3), beta(3), gamma(1), delta(1), epsilon(1). CF(0) has three main subunits: a(1), b(2) and c(9-12). The alpha and beta chains form an alternating ring which encloses part of the gamma chain. CF(1) is attached to CF(0) by a central stalk formed by the gamma and epsilon chains, while a peripheral stalk is formed by the delta and b chains.

Its subcellular location is the cell membrane. Its function is as follows. Key component of the proton channel; it plays a direct role in the translocation of protons across the membrane. This is ATP synthase subunit a from Buchnera aphidicola subsp. Schizaphis graminum (strain Sg).